The primary structure comprises 209 residues: Uracil phosphoribosyltransferase (209 aa).

5-phospho-alpha-D-ribose 1-diphosphate is bound by residues arginine 79, arginine 104, and 131–139 (DPMLATGGS). Uracil contacts are provided by residues isoleucine 194 and 199-201 (GDA). Residue aspartate 200 coordinates 5-phospho-alpha-D-ribose 1-diphosphate.

Belongs to the UPRTase family. Mg(2+) is required as a cofactor.

The enzyme catalyses UMP + diphosphate = 5-phospho-alpha-D-ribose 1-diphosphate + uracil. Its pathway is pyrimidine metabolism; UMP biosynthesis via salvage pathway; UMP from uracil: step 1/1. With respect to regulation, allosterically activated by GTP. Catalyzes the conversion of uracil and 5-phospho-alpha-D-ribose 1-diphosphate (PRPP) to UMP and diphosphate. This chain is Uracil phosphoribosyltransferase, found in Geobacillus kaustophilus (strain HTA426).